Reading from the N-terminus, the 159-residue chain is Ribosomal RNA large subunit methyltransferase H (159 aa).

Residues leucine 76, glycine 108, and 127–132 (FGRLTL) contribute to the S-adenosyl-L-methionine site.

Belongs to the RNA methyltransferase RlmH family. In terms of assembly, homodimer.

It localises to the cytoplasm. The catalysed reaction is pseudouridine(1915) in 23S rRNA + S-adenosyl-L-methionine = N(3)-methylpseudouridine(1915) in 23S rRNA + S-adenosyl-L-homocysteine + H(+). Specifically methylates the pseudouridine at position 1915 (m3Psi1915) in 23S rRNA. The sequence is that of Ribosomal RNA large subunit methyltransferase H from Listeria monocytogenes serovar 1/2a (strain ATCC BAA-679 / EGD-e).